Reading from the N-terminus, the 302-residue chain is Sulfate adenylyltransferase subunit 2 (302 aa).

The protein belongs to the PAPS reductase family. CysD subfamily. As to quaternary structure, heterodimer composed of CysD, the smaller subunit, and CysN.

It carries out the reaction sulfate + ATP + H(+) = adenosine 5'-phosphosulfate + diphosphate. It functions in the pathway sulfur metabolism; hydrogen sulfide biosynthesis; sulfite from sulfate: step 1/3. Functionally, with CysN forms the ATP sulfurylase (ATPS) that catalyzes the adenylation of sulfate producing adenosine 5'-phosphosulfate (APS) and diphosphate, the first enzymatic step in sulfur assimilation pathway. APS synthesis involves the formation of a high-energy phosphoric-sulfuric acid anhydride bond driven by GTP hydrolysis by CysN coupled to ATP hydrolysis by CysD. This is Sulfate adenylyltransferase subunit 2 from Serratia proteamaculans (strain 568).